Here is a 76-residue protein sequence, read N- to C-terminus: Acyl carrier protein (76 aa).

Residues 1-76 (MALLDDVKAV…DAIKYIENNA (76 aa)) enclose the Carrier domain. O-(pantetheine 4'-phosphoryl)serine is present on Ser-36.

It belongs to the acyl carrier protein (ACP) family. 4'-phosphopantetheine is transferred from CoA to a specific serine of apo-ACP by AcpS. This modification is essential for activity because fatty acids are bound in thioester linkage to the sulfhydryl of the prosthetic group.

It is found in the cytoplasm. The protein operates within lipid metabolism; fatty acid biosynthesis. Functionally, carrier of the growing fatty acid chain in fatty acid biosynthesis. This Aliarcobacter butzleri (strain RM4018) (Arcobacter butzleri) protein is Acyl carrier protein.